Reading from the N-terminus, the 250-residue chain is Small ribosomal subunit protein uS3 (250 aa).

The 70-residue stretch at 16–85 folds into the KH type-2 domain; it reads IDEYLEKELE…NPQIEVKEVS (70 aa).

This sequence belongs to the universal ribosomal protein uS3 family. As to quaternary structure, part of the 30S ribosomal subunit.

Its function is as follows. Binds the lower part of the 30S subunit head. The protein is Small ribosomal subunit protein uS3 of Methanobrevibacter smithii (strain ATCC 35061 / DSM 861 / OCM 144 / PS).